Here is a 335-residue protein sequence, read N- to C-terminus: Beta-ketoacyl-[acyl-carrier-protein] synthase III 2 (335 aa).

Catalysis depends on residues C116 and H256. Positions 257-261 are ACP-binding; sequence QANVR. N286 is an active-site residue.

The protein belongs to the thiolase-like superfamily. FabH family. In terms of assembly, homodimer.

The protein resides in the cytoplasm. The enzyme catalyses malonyl-[ACP] + acetyl-CoA + H(+) = 3-oxobutanoyl-[ACP] + CO2 + CoA. It functions in the pathway lipid metabolism; fatty acid biosynthesis. Functionally, catalyzes the condensation reaction of fatty acid synthesis by the addition to an acyl acceptor of two carbons from malonyl-ACP. Catalyzes the first condensation reaction which initiates fatty acid synthesis and may therefore play a role in governing the total rate of fatty acid production. Possesses both acetoacetyl-ACP synthase and acetyl transacylase activities. Its substrate specificity determines the biosynthesis of branched-chain and/or straight-chain of fatty acids. The protein is Beta-ketoacyl-[acyl-carrier-protein] synthase III 2 of Bacteroides thetaiotaomicron (strain ATCC 29148 / DSM 2079 / JCM 5827 / CCUG 10774 / NCTC 10582 / VPI-5482 / E50).